Here is a 222-residue protein sequence, read N- to C-terminus: S-crystallin SL20-1 (222 aa).

Residues 2–80 (PNYTLYYFNG…YLARENGYYG (79 aa)) enclose the GST N-terminal domain. Positions 82–222 (NNMDMFRIDY…YLKKRNNTNW (141 aa)) constitute a GST C-terminal domain.

The protein belongs to the GST superfamily. In terms of tissue distribution, lens.

Functionally, S-crystallins are structural components of squids and octopi eye lens. Contains relatively little if any GST activity. The sequence is that of S-crystallin SL20-1 from Nototodarus sloanii (Wellington flying squid).